The primary structure comprises 1303 residues: Phosphoribosylformylglycinamidine synthase (1303 aa).

Residues 308–319 and Ala-679 contribute to the ATP site; that span reads GASTGSGGEIRD. Mg(2+) contacts are provided by Glu-719, Asn-723, and Asp-892. Residues 1003-1023 are disordered; that stretch reads LRDNPACADQEHEAKKDNSDP. Residues 1011 to 1021 are compositionally biased toward basic and acidic residues; sequence DQEHEAKKDNS. The Glutamine amidotransferase type-1 domain occupies 1050-1303; it reads MAILREQGVN…MFQNARKNIG (254 aa). Catalysis depends on Cys-1143, which acts as the Nucleophile. Active-site residues include His-1268 and Glu-1270.

The protein in the N-terminal section; belongs to the FGAMS family. Monomer.

It localises to the cytoplasm. The catalysed reaction is N(2)-formyl-N(1)-(5-phospho-beta-D-ribosyl)glycinamide + L-glutamine + ATP + H2O = 2-formamido-N(1)-(5-O-phospho-beta-D-ribosyl)acetamidine + L-glutamate + ADP + phosphate + H(+). Its pathway is purine metabolism; IMP biosynthesis via de novo pathway; 5-amino-1-(5-phospho-D-ribosyl)imidazole from N(2)-formyl-N(1)-(5-phospho-D-ribosyl)glycinamide: step 1/2. Phosphoribosylformylglycinamidine synthase involved in the purines biosynthetic pathway. Catalyzes the ATP-dependent conversion of formylglycinamide ribonucleotide (FGAR) and glutamine to yield formylglycinamidine ribonucleotide (FGAM) and glutamate. This is Phosphoribosylformylglycinamidine synthase from Aliivibrio fischeri (strain ATCC 700601 / ES114) (Vibrio fischeri).